Consider the following 510-residue polypeptide: NAD(P)H-quinone oxidoreductase subunit 2 A, chloroplastic (510 aa).

A run of 14 helical transmembrane segments spans residues 31–51 (FIFP…IDLT), 59–79 (WFYF…LFRW), 99–119 (IFQF…VEYI), 124–144 (MAIT…MFLC), 149–169 (LITI…LSGY), 184–204 (LLMG…LYGL), 229–249 (ISIA…LAPF), 261–281 (PTPV…ALAT), 295–315 (WHLL…LLAI), 323–343 (MLAY…IVGD), 354–374 (YMLF…LFGL), 395–415 (ALSL…AGFF), 418–438 (LYLF…IGLL), and 484–504 (MTVC…ILAI).

This sequence belongs to the complex I subunit 2 family. In terms of assembly, NDH is composed of at least 16 different subunits, 5 of which are encoded in the nucleus.

It is found in the plastid. It localises to the chloroplast thylakoid membrane. The enzyme catalyses a plastoquinone + NADH + (n+1) H(+)(in) = a plastoquinol + NAD(+) + n H(+)(out). It catalyses the reaction a plastoquinone + NADPH + (n+1) H(+)(in) = a plastoquinol + NADP(+) + n H(+)(out). Functionally, NDH shuttles electrons from NAD(P)H:plastoquinone, via FMN and iron-sulfur (Fe-S) centers, to quinones in the photosynthetic chain and possibly in a chloroplast respiratory chain. The immediate electron acceptor for the enzyme in this species is believed to be plastoquinone. Couples the redox reaction to proton translocation, and thus conserves the redox energy in a proton gradient. The sequence is that of NAD(P)H-quinone oxidoreductase subunit 2 A, chloroplastic from Oryza sativa subsp. japonica (Rice).